Consider the following 26-residue polypeptide: ATP synthase subunit gamma, mitochondrial (26 aa).

Belongs to the ATPase gamma chain family. As to quaternary structure, F-type ATPases have 2 components, CF(1) - the catalytic core - and CF(0) - the membrane proton channel. CF(1) has five subunits: alpha(3), beta(3), gamma(1), delta(1), epsilon(1). CF(0) has three main subunits: a, b and c.

The protein resides in the mitochondrion. It is found in the mitochondrion inner membrane. Its function is as follows. Mitochondrial membrane ATP synthase (F(1)F(0) ATP synthase or Complex V) produces ATP from ADP in the presence of a proton gradient across the membrane which is generated by electron transport complexes of the respiratory chain. F-type ATPases consist of two structural domains, F(1) - containing the extramembraneous catalytic core, and F(0) - containing the membrane proton channel, linked together by a central stalk and a peripheral stalk. During catalysis, ATP synthesis in the catalytic domain of F(1) is coupled via a rotary mechanism of the central stalk subunits to proton translocation. Part of the complex F(1) domain and the central stalk which is part of the complex rotary element. The gamma subunit protrudes into the catalytic domain formed of alpha(3)beta(3). Rotation of the central stalk against the surrounding alpha(3)beta(3) subunits leads to hydrolysis of ATP in three separate catalytic sites on the beta subunits. This Spinacia oleracea (Spinach) protein is ATP synthase subunit gamma, mitochondrial (ATPC).